A 24-amino-acid chain; its full sequence is Caerulein precursor fragment B4 (24 aa).

Expressed by the skin glands.

Its subcellular location is the secreted. In terms of biological role, has antibacterial and antifungal activity. The sequence is that of Caerulein precursor fragment B4 from Xenopus borealis (Kenyan clawed frog).